A 297-amino-acid polypeptide reads, in one-letter code: ER membrane protein complex subunit 2-B (297 aa).

TPR repeat units lie at residues 87 to 120 (HRVK…DPTN), 155 to 188 (QEAW…NPHN), and 192 to 225 (YQQF…NNHS).

The protein belongs to the EMC2 family. As to quaternary structure, component of the ER membrane protein complex (EMC).

It is found in the endoplasmic reticulum membrane. Its function is as follows. Part of the endoplasmic reticulum membrane protein complex (EMC) that enables the energy-independent insertion into endoplasmic reticulum membranes of newly synthesized membrane proteins. Preferentially accommodates proteins with transmembrane domains that are weakly hydrophobic or contain destabilizing features such as charged and aromatic residues. Involved in the cotranslational insertion of multi-pass membrane proteins in which stop-transfer membrane-anchor sequences become ER membrane spanning helices. It is also required for the post-translational insertion of tail-anchored/TA proteins in endoplasmic reticulum membranes. By mediating the proper cotranslational insertion of N-terminal transmembrane domains in an N-exo topology, with translocated N-terminus in the lumen of the ER, controls the topology of multi-pass membrane proteins. By regulating the insertion of various proteins in membranes, it is indirectly involved in many cellular processes. The sequence is that of ER membrane protein complex subunit 2-B (emc2-b) from Xenopus laevis (African clawed frog).